The chain runs to 320 residues: Aspartate carbamoyltransferase catalytic subunit (320 aa).

Carbamoyl phosphate-binding residues include R70 and T71. Position 98 (K98) interacts with L-aspartate. Carbamoyl phosphate-binding residues include R120, H149, and Q152. L-aspartate contacts are provided by R182 and R237. The carbamoyl phosphate site is built by G278 and P279.

The protein belongs to the aspartate/ornithine carbamoyltransferase superfamily. ATCase family. As to quaternary structure, heterododecamer (2C3:3R2) of six catalytic PyrB chains organized as two trimers (C3), and six regulatory PyrI chains organized as three dimers (R2).

The catalysed reaction is carbamoyl phosphate + L-aspartate = N-carbamoyl-L-aspartate + phosphate + H(+). It functions in the pathway pyrimidine metabolism; UMP biosynthesis via de novo pathway; (S)-dihydroorotate from bicarbonate: step 2/3. In terms of biological role, catalyzes the condensation of carbamoyl phosphate and aspartate to form carbamoyl aspartate and inorganic phosphate, the committed step in the de novo pyrimidine nucleotide biosynthesis pathway. This chain is Aspartate carbamoyltransferase catalytic subunit, found in Ruthia magnifica subsp. Calyptogena magnifica.